Here is an 82-residue protein sequence, read N- to C-terminus: Small ribosomal subunit protein bS16 (82 aa).

Belongs to the bacterial ribosomal protein bS16 family.

The chain is Small ribosomal subunit protein bS16 from Dehalococcoides mccartyi (strain ATCC BAA-2266 / KCTC 15142 / 195) (Dehalococcoides ethenogenes (strain 195)).